The chain runs to 467 residues: 6-phospho-beta-galactosidase (467 aa).

5 residues coordinate D-galactose 6-phosphate: Gln19, His116, Asn159, Glu160, and Asn297. Glu160 (proton donor) is an active-site residue. Glu375 serves as the catalytic Nucleophile. D-galactose 6-phosphate contacts are provided by Ser428, Trp429, Lys435, and Tyr437.

It belongs to the glycosyl hydrolase 1 family.

The enzyme catalyses a 6-phospho-beta-D-galactoside + H2O = D-galactose 6-phosphate + an alcohol. Its pathway is carbohydrate metabolism; lactose degradation; D-galactose 6-phosphate and beta-D-glucose from lactose 6-phosphate: step 1/1. Inhibited by both galactose-6-phosphate and ATP. In Leptotrichia buccalis (strain ATCC 14201 / DSM 1135 / JCM 12969 / NCTC 10249 / C-1013-b), this protein is 6-phospho-beta-galactosidase.